The sequence spans 534 residues: Endoglucanase 5 (534 aa).

A signal peptide spans 1-27; that stretch reads MSDVSGRFVVAAAVVAVSLAMAAAAAA. Residue D82 is the Nucleophile of the active site. Active-site residues include H432, D484, and E493. Residues 515-534 form a disordered region; that stretch reads RRRGEDAPPSSTSPVAEDDL.

This sequence belongs to the glycosyl hydrolase 9 (cellulase E) family.

Its subcellular location is the secreted. The enzyme catalyses Endohydrolysis of (1-&gt;4)-beta-D-glucosidic linkages in cellulose, lichenin and cereal beta-D-glucans.. This chain is Endoglucanase 5, found in Oryza sativa subsp. japonica (Rice).